We begin with the raw amino-acid sequence, 200 residues long: MPEALQELAAHVRMRQPDAILGHRVEFGELTLDVVPNRIVGLVEFLRSDASCRFSSLVDITAIDHPERPARFDVVYHFLSMYQNQRIRLKMQVREDETVASIHSVHPSANWFEREVFDMFGILFTGHPDLRRILTDYGFRGHPMRKDFPTTGYTEVRYDEVQKRVVYEPVKLVQEYRQFDFLSPWEGADYILPGDDKART.

This sequence belongs to the complex I 30 kDa subunit family. In terms of assembly, NDH-1 is composed of 14 different subunits. Subunits NuoB, C, D, E, F, and G constitute the peripheral sector of the complex.

It localises to the cell inner membrane. The catalysed reaction is a quinone + NADH + 5 H(+)(in) = a quinol + NAD(+) + 4 H(+)(out). Functionally, NDH-1 shuttles electrons from NADH, via FMN and iron-sulfur (Fe-S) centers, to quinones in the respiratory chain. The immediate electron acceptor for the enzyme in this species is believed to be ubiquinone. Couples the redox reaction to proton translocation (for every two electrons transferred, four hydrogen ions are translocated across the cytoplasmic membrane), and thus conserves the redox energy in a proton gradient. The chain is NADH-quinone oxidoreductase subunit C from Cereibacter sphaeroides (strain ATCC 17029 / ATH 2.4.9) (Rhodobacter sphaeroides).